The sequence spans 79 residues: ATP synthase subunit c (79 aa).

A run of 2 helical transmembrane segments spans residues 11–31 (MAAAIMMGLAAIGAAIGIGIL) and 53–73 (FFIVMGLVDAIPMIAVGLGLY).

This sequence belongs to the ATPase C chain family. As to quaternary structure, F-type ATPases have 2 components, F(1) - the catalytic core - and F(0) - the membrane proton channel. F(1) has five subunits: alpha(3), beta(3), gamma(1), delta(1), epsilon(1). F(0) has three main subunits: a(1), b(2) and c(10-14). The alpha and beta chains form an alternating ring which encloses part of the gamma chain. F(1) is attached to F(0) by a central stalk formed by the gamma and epsilon chains, while a peripheral stalk is formed by the delta and b chains.

Its subcellular location is the cell inner membrane. F(1)F(0) ATP synthase produces ATP from ADP in the presence of a proton or sodium gradient. F-type ATPases consist of two structural domains, F(1) containing the extramembraneous catalytic core and F(0) containing the membrane proton channel, linked together by a central stalk and a peripheral stalk. During catalysis, ATP synthesis in the catalytic domain of F(1) is coupled via a rotary mechanism of the central stalk subunits to proton translocation. In terms of biological role, key component of the F(0) channel; it plays a direct role in translocation across the membrane. A homomeric c-ring of between 10-14 subunits forms the central stalk rotor element with the F(1) delta and epsilon subunits. This is ATP synthase subunit c from Yersinia enterocolitica serotype O:8 / biotype 1B (strain NCTC 13174 / 8081).